The chain runs to 145 residues: RNA polymerase I-specific transcription initiation factor RRN10 (145 aa).

As to quaternary structure, component of the UAF (upstream activation factor) complex which consists of UAF30, RRN5, RRN9, RRN10, and histones H3 and H4.

It is found in the nucleus. Its subcellular location is the nucleolus. In terms of biological role, component of the UAF (upstream activation factor) complex which interacts with the upstream element of the RNA polymerase I promoter and forms a stable preinitiation complex. Together with SPT15/TBP UAF seems to stimulate basal transcription to a fully activated level. The polypeptide is RNA polymerase I-specific transcription initiation factor RRN10 (RRN10) (Saccharomyces cerevisiae (strain ATCC 204508 / S288c) (Baker's yeast)).